The following is an 84-amino-acid chain: UPF0473 protein CLI_2624 (84 aa).

The protein belongs to the UPF0473 family.

The sequence is that of UPF0473 protein CLI_2624 from Clostridium botulinum (strain Langeland / NCTC 10281 / Type F).